A 304-amino-acid chain; its full sequence is Recombination-associated protein RdgC (304 aa).

The protein belongs to the RdgC family.

It localises to the cytoplasm. It is found in the nucleoid. Its function is as follows. May be involved in recombination. The polypeptide is Recombination-associated protein RdgC (Shewanella oneidensis (strain ATCC 700550 / JCM 31522 / CIP 106686 / LMG 19005 / NCIMB 14063 / MR-1)).